The chain runs to 218 residues: Thiopurine S-methyltransferase (218 aa).

Residues tryptophan 10, leucine 45, glutamate 66, and arginine 123 each coordinate S-adenosyl-L-methionine.

The protein belongs to the class I-like SAM-binding methyltransferase superfamily. TPMT family.

The protein localises to the cytoplasm. The enzyme catalyses S-adenosyl-L-methionine + a thiopurine = S-adenosyl-L-homocysteine + a thiopurine S-methylether.. The polypeptide is Thiopurine S-methyltransferase (Shewanella sp. (strain MR-7)).